The primary structure comprises 169 residues: MELYTVGKIVNTHGIRGEVKVVATTDFVDQRFADGATLYLVKKDQAPVELTVEHARMHKGLVLVKFKQFNNINEVQHFRDAELKVADQDQAELEEGQYYYHQIIGLTAETVDGRVLGKIKEILAPGANDVWVVDRKQKTDLLLPVIDDVVKEVDLAGGKVIVELLEGLE.

The region spanning 94-168 (EEGQYYYHQI…KVIVELLEGL (75 aa)) is the PRC barrel domain.

The protein belongs to the RimM family. As to quaternary structure, binds ribosomal protein uS19.

Its subcellular location is the cytoplasm. In terms of biological role, an accessory protein needed during the final step in the assembly of 30S ribosomal subunit, possibly for assembly of the head region. Essential for efficient processing of 16S rRNA. May be needed both before and after RbfA during the maturation of 16S rRNA. It has affinity for free ribosomal 30S subunits but not for 70S ribosomes. This Limosilactobacillus fermentum (strain NBRC 3956 / LMG 18251) (Lactobacillus fermentum) protein is Ribosome maturation factor RimM.